Reading from the N-terminus, the 165-residue chain is Nascent polypeptide-associated complex subunit alpha (165 aa).

The NAC-A/B domain occupies 14-78; sequence NRNEKKAREL…AKVDNFTQRL (65 aa). Positions 126–165 constitute a UBA domain; sequence LSNDDIDLVVQQTNATKGQAIKALKEHNGDIVNAIMSLSK.

The protein belongs to the NAC-alpha family. As to quaternary structure, part of the nascent polypeptide-associated complex (NAC), consisting of EGD2 and EGD1. NAC associates with ribosomes via EGD1.

Its subcellular location is the cytoplasm. The protein localises to the nucleus. Component of the nascent polypeptide-associated complex (NAC), a dynamic component of the ribosomal exit tunnel, protecting the emerging polypeptides from interaction with other cytoplasmic proteins to ensure appropriate nascent protein targeting. The NAC complex also promotes mitochondrial protein import by enhancing productive ribosome interactions with the outer mitochondrial membrane and blocks the inappropriate interaction of ribosomes translating non-secretory nascent polypeptides with translocation sites in the membrane of the endoplasmic reticulum. EGD2 may also be involved in transcription regulation. The polypeptide is Nascent polypeptide-associated complex subunit alpha (EGD2) (Candida glabrata (strain ATCC 2001 / BCRC 20586 / JCM 3761 / NBRC 0622 / NRRL Y-65 / CBS 138) (Yeast)).